Reading from the N-terminus, the 108-residue chain is Transmembrane protein 141 (108 aa).

2 consecutive transmembrane segments (helical) span residues 32 to 52 (MKGV…QMFI) and 58 to 78 (YPLQ…SYGV).

The protein belongs to the TMEM141 family.

The protein resides in the membrane. The protein is Transmembrane protein 141 (TMEM141) of Homo sapiens (Human).